Consider the following 299-residue polypeptide: Ent-kaurene oxidase-like protein 1 (299 aa).

Residues 16–36 traverse the membrane as a helical segment; the sequence is AVVGVFVAAAVVGGFVAAVAL.

The protein belongs to the cytochrome P450 family. Expressed in roots and panicles.

It localises to the membrane. The sequence is that of Ent-kaurene oxidase-like protein 1 from Oryza sativa subsp. japonica (Rice).